The primary structure comprises 332 residues: L-lactate dehydrogenase A chain (332 aa).

NAD(+) is bound by residues 29 to 57 (GAVG…IEDK) and arginine 99. Substrate contacts are provided by arginine 106, asparagine 138, and arginine 169. Asparagine 138 contributes to the NAD(+) binding site. The Proton acceptor role is filled by histidine 193. Substrate is bound at residue threonine 248.

It belongs to the LDH/MDH superfamily. LDH family. As to quaternary structure, homotetramer.

The protein resides in the cytoplasm. The catalysed reaction is (S)-lactate + NAD(+) = pyruvate + NADH + H(+). The protein operates within fermentation; pyruvate fermentation to lactate; (S)-lactate from pyruvate: step 1/1. Functionally, interconverts simultaneously and stereospecifically pyruvate and lactate with concomitant interconversion of NADH and NAD(+). The polypeptide is L-lactate dehydrogenase A chain (LDHA) (Trachemys scripta elegans (Red-eared slider turtle)).